Consider the following 788-residue polypeptide: MITVVKRNGRIEPLDITKIQKYTKDATDNLEGVSQSELEVDARLQFRDKITTEEIQQTLIKTAVDKIDIDTPNWSFVASRLFLYDLYHKVSGFTGYRHLKEYFENAEEKGRILKGFKEKFDLEFLNSQIKPERDFQFNYLGIKTLYDRYLLKDANNHPIELPQHMFMSIAMFLAQNEQELNKIALEFYEVLSKFEAMCATPTLANARTTKHQLSSCYIGSTPDNIEGIFDSYKEMALLSKYGGGIGWDFSLVRSIGSYIDGHKNASAGTIPFLKIANDVAIAVDQLGTRKGAIAVYLEIWHIDVMEFIDLRKNSGDERRRAHDLFPALWVCDLFMKRVLEDAMWTLFDPYECKDLTELYGQDFEKRYLEYEKDPKIIKEYINAKDLWKKILMNYFEAGLPFLAFKDNANRCNPNAHAGIIRSSNLCTEIFQNTAPNHYYMQIEYTDGAIEFFEEKELVTTDSNITKCANKLTSTDILKGKKIYIATKVAKDGQTAVCNLASINLSKINTEEDIKRVVPIMVRLLDNVIDLNFYPNRKVKATNLQNRAIGLGVMGEAQMLAEHQIAWGSKEHLEKIDALMEQISYHAIDTSANLAKEKGVYKDFENSEWSKGIFPIDKANNEALKLTEKGLFNHACDWQGLREKVKANGMRNGYLMAIAPTSSISILVGTTQTIEPIYKKKWFEENLSGLIPVVVPNLNVETWNFYTSAYDIDAKDLIKAAAVRQKWIDQGQSINVFLRIENASGKTLHEIYTLAWKLGLKSTYYLRSESPSIDEKSVLDRSVECFNCQ.

The ATP-cone domain occupies 2–92; it reads ITVVKRNGRI…LYDLYHKVSG (91 aa). ATP is bound by residues Lys6, 12 to 18, and Thr52; that span reads EPLDITK. Thr200 provides a ligand contact to GDP. An intrachain disulfide couples Cys216 to Cys497. DTTP is bound by residues 223–225 and Arg253; that span reads DNI. A GDP-binding site is contributed by Asn424. Catalysis depends on Asn424, which acts as the Proton acceptor. Catalysis depends on Cys426, which acts as the Cysteine radical intermediate. GDP is bound by residues Glu428 and 661–663; that span reads SSI. Glu428 acts as the Proton acceptor in catalysis.

Belongs to the ribonucleoside diphosphate reductase large chain family. Tetramer of two alpha and two beta subunits.

It carries out the reaction a 2'-deoxyribonucleoside 5'-diphosphate + [thioredoxin]-disulfide + H2O = a ribonucleoside 5'-diphosphate + [thioredoxin]-dithiol. Its activity is regulated as follows. Under complex allosteric control mediated by deoxynucleoside triphosphates and ATP binding to separate specificity and activation sites on the alpha subunit. The type of nucleotide bound at the specificity site determines substrate preference. It seems probable that ATP makes the enzyme reduce CDP and UDP, dGTP favors ADP reduction and dTTP favors GDP reduction. Stimulated by ATP and inhibited by dATP binding to the activity site. Functionally, provides the precursors necessary for DNA synthesis. Catalyzes the biosynthesis of deoxyribonucleotides from the corresponding ribonucleotides. In Helicobacter pylori (strain J99 / ATCC 700824) (Campylobacter pylori J99), this protein is Ribonucleoside-diphosphate reductase subunit alpha (nrdA).